The primary structure comprises 396 residues: Succinyl-CoA:mesaconate CoA-transferase (396 aa).

The active-site Nucleophile is Asp175.

It belongs to the CoA-transferase III family. Homodimer.

It carries out the reaction mesaconate + succinyl-CoA = 2-methylfumaryl-CoA + succinate. With respect to regulation, shows highest activity at 4 M KCl. Does not require divalent ions for activity. Its function is as follows. Involved in the methylaspartate cycle. Catalyzes the transfer of the CoA moiety from succinyl-CoA to mesaconate to generate mesaconyl-CoA (2-methylfumaryl-CoA) and succinate. Also shows high activity with methylsuccinate as CoA-acceptor, and only low activity with glutarate, acrylate and itaconate. Cannot use other CoA donors like acetyl-CoA, propionyl-CoA, butyryl-CoA or acetoacetyl-CoA. This is Succinyl-CoA:mesaconate CoA-transferase from Haloarcula hispanica (strain ATCC 33960 / DSM 4426 / JCM 8911 / NBRC 102182 / NCIMB 2187 / VKM B-1755).